The primary structure comprises 476 residues: Monofunctional riboflavin biosynthesis protein RIBA 2, chloroplastic (476 aa).

The transit peptide at 1 to 54 (MASLTLRCDSTHLLPSRDVVKGTKPFGTSLVYPRIISKKFNVRMRVIPEEGDVF) directs the protein to the chloroplast. The DHBP synthase stretch occupies residues 44–306 (MRVIPEEGDV…IADLIRYRRK (263 aa)). D-ribulose 5-phosphate is bound by residues 130–131 (RE), Asp135, 245–249 (RAGHT), and Glu269. Residue Glu131 coordinates Mg(2+). Position 248 (His248) interacts with Mg(2+). Residues 307-476 (RERLVEFTAV…SGKVPLITTP (170 aa)) form an inactive GTP cyclohydrolase II region. Residues 357–361 (RVHAE), Gln376, 399–401 (ESK), and Thr450 each bind GTP.

It in the N-terminal section; belongs to the DHBP synthase family. The protein in the C-terminal section; belongs to the GTP cyclohydrolase II family. Requires Mg(2+) as cofactor. Mn(2+) serves as cofactor. In terms of tissue distribution, expressed in leaves, shoots, roots, flowers and siliques.

It is found in the plastid. The protein resides in the chloroplast. It carries out the reaction D-ribulose 5-phosphate = (2S)-2-hydroxy-3-oxobutyl phosphate + formate + H(+). It participates in cofactor biosynthesis; riboflavin biosynthesis; 2-hydroxy-3-oxobutyl phosphate from D-ribulose 5-phosphate: step 1/1. Its function is as follows. Involved in riboflavin biosynthesis. Catalyzes the conversion of D-ribulose 5-phosphate to formate and 3,4-dihydroxy-2-butanone 4-phosphate. RIBA2 and RIBA3 together are not able to complement the loss of function of RIBA1. The chain is Monofunctional riboflavin biosynthesis protein RIBA 2, chloroplastic (RIBA2) from Arabidopsis thaliana (Mouse-ear cress).